The following is a 228-amino-acid chain: Glutamate transport system permease protein GluC (228 aa).

Helical transmembrane passes span 16–36 (FWVT…FGTI), 64–84 (LTLV…LTLA), 100–120 (AVLG…RSGI), 145–165 (IIFP…LIAL), and 195–215 (LFVV…PMGL). Residues 16–217 (FWVTIKLTIY…ILTLPMGLGL (202 aa)) form the ABC transmembrane type-1 domain.

This sequence belongs to the binding-protein-dependent transport system permease family. HisMQ subfamily. In terms of assembly, the complex is composed of two ATP-binding proteins (GluA), two transmembrane proteins (GluC and GluD) and a solute-binding protein (GluB).

Its subcellular location is the cell membrane. Functionally, part of the ABC transporter complex GluABCD involved in glutamate uptake. Probably responsible for the translocation of the substrate across the membrane. This Corynebacterium glutamicum (strain ATCC 13032 / DSM 20300 / JCM 1318 / BCRC 11384 / CCUG 27702 / LMG 3730 / NBRC 12168 / NCIMB 10025 / NRRL B-2784 / 534) protein is Glutamate transport system permease protein GluC.